Consider the following 34-residue polypeptide: Protamine (34 aa).

Positions 1–34 (PRRRRQASRPVRRRRRTRRSTAERRRRRVVRRRR) are disordered.

As to expression, testis.

It is found in the nucleus. Its subcellular location is the chromosome. Protamines substitute for histones in the chromatin of sperm during the haploid phase of spermatogenesis. They compact sperm DNA into a highly condensed, stable and inactive complex. This Dicentrarchus labrax (European seabass) protein is Protamine.